Consider the following 1966-residue polypeptide: Probable serine/threonine-protein kinase vps15 (1966 aa).

In terms of domain architecture, Protein kinase spans 21–303; the sequence is IVFKKSLGNA…QYFSFAHQFI (283 aa). Residues 27-35 and Lys-49 contribute to the ATP site; that span reads LGNARFLKT. The Proton acceptor role is filled by Asp-144. Residues 362 to 407 form a disordered region; it reads PILISNNNNNNNNNNNNNNNNNNNNNNNNNNNNNNNNNQTTTTTTN. Positions 367–407 are enriched in low complexity; sequence NNNNNNNNNNNNNNNNNNNNNNNNNNNNNNNNNQTTTTTTN. 4 HEAT repeats span residues 558–596, 604–642, 717–754, and 756–793; these read CRLQ…MVQT, IFGQ…TAKR, KTNE…VVGA, and SLES…LGLL. Disordered regions lie at residues 916-937, 1036-1062, 1106-1130, and 1190-1263; these read SFNS…TGGS, SSSN…TNST, GGIT…TGLN, and TSLS…NNMN. Composition is skewed to low complexity over residues 1106 to 1119 and 1192 to 1263; these read GGIT…TTLG and LSNS…NNMN. 4 WD repeats span residues 1460–1499, 1508–1547, 1564–1605, and 1610–1649; these read EHKA…KSVT, QQEG…KQKN, TTRG…DAFN, and ASLG…PLYS. Positions 1699-1743 are disordered; it reads RSYEQPPQQQPQQPQPPQQQQQQQSQMNRSINMTSSTTTTTTSSY. 2 stretches are compositionally biased toward low complexity: residues 1703–1722 and 1732–1742; these read QPPQ…QQQQ and TSSTTTTTTSS. WD repeat units follow at residues 1790–1829 and 1935–1966; these read KPTP…QSYY and HHQE…KVWK.

The protein belongs to the protein kinase superfamily. Ser/Thr protein kinase family.

It catalyses the reaction L-seryl-[protein] + ATP = O-phospho-L-seryl-[protein] + ADP + H(+). The enzyme catalyses L-threonyl-[protein] + ATP = O-phospho-L-threonyl-[protein] + ADP + H(+). The polypeptide is Probable serine/threonine-protein kinase vps15 (vps15) (Dictyostelium discoideum (Social amoeba)).